The following is a 463-amino-acid chain: Casein kinase 1 (463 aa).

Positions 9–278 constitute a Protein kinase domain; sequence FKLGRKIGSG…LKRLFRDLFI (270 aa). ATP-binding positions include 15–23 and K38; that span reads IGSGSFGEL. D128 (proton acceptor) is an active-site residue. The segment covering 296-306 has biased composition (polar residues); it reads ESNRLRSSGRT. Residues 296–448 are disordered; that stretch reads ESNRLRSSGR…TARNVHDDPT (153 aa). Residues 315-328 show a composition bias toward basic and acidic residues; that stretch reads ERTERAAARQDVPD. Composition is skewed to polar residues over residues 376–396 and 404–440; these read TSSS…SRPS and NRSN…TKTA.

Belongs to the protein kinase superfamily. CK1 Ser/Thr protein kinase family. Casein kinase I subfamily. As to quaternary structure, monomer. Post-translationally, autophosphorylated. In terms of tissue distribution, expressed in leaves, stems, panicles and seeds. Expressed in root tissues and lamina joints.

The protein localises to the cytoplasm. It is found in the nucleus. The enzyme catalyses L-seryl-[protein] + ATP = O-phospho-L-seryl-[protein] + ADP + H(+). It carries out the reaction L-threonyl-[protein] + ATP = O-phospho-L-threonyl-[protein] + ADP + H(+). Its activity is regulated as follows. Inhibited by N-(2-aminoethyl)-5-chloroisoquinoline-8-sulfonamide (CKI-7). Casein kinases are operationally defined by their preferential utilization of acidic proteins such as caseins as substrates. Can phosphorylate casein in vitro. Required for normal root development through modulation of cell elongation. Plants silencing CKI1 show abnormal root development, with reduced number of lateral and adventitious roots, and shortened primary roots as a result of reduced cell elongation. May be involved in abscisic acid (ABA) and brassinosteroid (BR) signaling pathways. Plays an important role in the adaptive growth and fitness under low temperature (LT) conditions. May confer tolerance to LT through an auxin-dependent process. This is Casein kinase 1 (CKI1) from Oryza sativa subsp. japonica (Rice).